The following is a 209-amino-acid chain: Probable GTP-binding protein EngB (209 aa).

In terms of domain architecture, EngB-type G spans 22–198; that stretch reads TPLEIAFVGR…NRTVGSWFDA (177 aa). Positions 37 and 59 each coordinate Mg(2+).

The protein belongs to the TRAFAC class TrmE-Era-EngA-EngB-Septin-like GTPase superfamily. EngB GTPase family. Mg(2+) is required as a cofactor.

Its function is as follows. Necessary for normal cell division and for the maintenance of normal septation. The sequence is that of Probable GTP-binding protein EngB from Neisseria gonorrhoeae.